Consider the following 343-residue polypeptide: 3-hydroxy-3-methylglutaryl-CoA lyase, cytoplasmic (343 aa).

A lipid anchor (N-myristoyl glycine) is attached at Gly-2. Residues 48-315 (VKIVEVGPRD…NTGVDLHKVM (268 aa)) form the Pyruvate carboxyltransferase domain. Arg-56 serves as a coordination point for substrate. Asp-57, His-248, and His-250 together coordinate a divalent metal cation. Residue Cys-281 is part of the active site. Asn-290 is an a divalent metal cation binding site.

Belongs to the HMG-CoA lyase family. A divalent metal cation is required as a cofactor. In terms of tissue distribution, present at high level in duodenum and small intestine (at protein level).

The protein localises to the cytoplasm. Its subcellular location is the cytosol. The protein resides in the endoplasmic reticulum membrane. The catalysed reaction is (3S)-3-hydroxy-3-methylglutaryl-CoA = acetoacetate + acetyl-CoA. The protein operates within metabolic intermediate metabolism; (S)-3-hydroxy-3-methylglutaryl-CoA degradation; acetoacetate from (S)-3-hydroxy-3-methylglutaryl-CoA: step 1/1. In terms of biological role, non-mitochondrial 3-hydroxy-3-methylglutaryl-CoA lyase that catalyzes a cation-dependent cleavage of (S)-3-hydroxy-3-methylglutaryl-CoA into acetyl-CoA and acetoacetate, a key step in ketogenesis, the products of which support energy production in nonhepatic animal tissues. The polypeptide is 3-hydroxy-3-methylglutaryl-CoA lyase, cytoplasmic (Hmgcll1) (Rattus norvegicus (Rat)).